A 572-amino-acid polypeptide reads, in one-letter code: Hemagglutinin-neuraminidase (572 aa).

Residues 1–31 are Intravirion-facing; it reads MEYWKHTNHGKDAGNELETSMATHGNKLTNK. A helical membrane pass occupies residues 32 to 52; sequence ITYILWTIILVLLSIVFIIVL. Residues 53 to 572 are Virion surface-facing; the sequence is INSIKSEKAH…FKTEIPKSCS (520 aa). 2 disulfides stabilise this stretch: Cys-190-Cys-214 and Cys-256-Cys-269. The segment at 252–257 is involved in neuraminidase activity; the sequence is NRKSCS. Asn-308 and Asn-351 each carry an N-linked (GlcNAc...) asparagine; by host glycan. 2 disulfide bridges follow: Cys-355-Cys-469 and Cys-463-Cys-473. N-linked (GlcNAc...) asparagine; by host glycosylation is present at Asn-523. Cys-535 and Cys-544 are oxidised to a cystine.

The protein belongs to the paramyxoviruses hemagglutinin-neuraminidase family. In terms of assembly, homotetramer; composed of disulfide-linked homodimers. Interacts with F protein trimer.

The protein resides in the virion membrane. The protein localises to the host cell membrane. It catalyses the reaction Hydrolysis of alpha-(2-&gt;3)-, alpha-(2-&gt;6)-, alpha-(2-&gt;8)- glycosidic linkages of terminal sialic acid residues in oligosaccharides, glycoproteins, glycolipids, colominic acid and synthetic substrates.. Its function is as follows. Attaches the virus to sialic acid-containing cell receptors and thereby initiating infection. Binding of HN protein to the receptor induces a conformational change that allows the F protein to trigger virion/cell membranes fusion. In terms of biological role, neuraminidase activity ensures the efficient spread of the virus by dissociating the mature virions from the neuraminic acid containing glycoproteins. This Homo sapiens (Human) protein is Hemagglutinin-neuraminidase (HN).